The following is a 382-amino-acid chain: Dual-specificity RNA methyltransferase RlmN (382 aa).

E91 acts as the Proton acceptor in catalysis. The Radical SAM core domain occupies 97-339 (ETDRGTLCIS…TTVRKTRGDD (243 aa)). A disulfide bridge links C104 with C344. Positions 111, 115, and 118 each coordinate [4Fe-4S] cluster. S-adenosyl-L-methionine contacts are provided by residues 165 to 166 (GE), S197, 219 to 221 (SLH), and N301. The active-site S-methylcysteine intermediate is C344.

This sequence belongs to the radical SAM superfamily. RlmN family. [4Fe-4S] cluster is required as a cofactor.

Its subcellular location is the cytoplasm. It carries out the reaction adenosine(2503) in 23S rRNA + 2 reduced [2Fe-2S]-[ferredoxin] + 2 S-adenosyl-L-methionine = 2-methyladenosine(2503) in 23S rRNA + 5'-deoxyadenosine + L-methionine + 2 oxidized [2Fe-2S]-[ferredoxin] + S-adenosyl-L-homocysteine. It catalyses the reaction adenosine(37) in tRNA + 2 reduced [2Fe-2S]-[ferredoxin] + 2 S-adenosyl-L-methionine = 2-methyladenosine(37) in tRNA + 5'-deoxyadenosine + L-methionine + 2 oxidized [2Fe-2S]-[ferredoxin] + S-adenosyl-L-homocysteine. Its function is as follows. Specifically methylates position 2 of adenine 2503 in 23S rRNA and position 2 of adenine 37 in tRNAs. m2A2503 modification seems to play a crucial role in the proofreading step occurring at the peptidyl transferase center and thus would serve to optimize ribosomal fidelity. The chain is Dual-specificity RNA methyltransferase RlmN from Polaromonas sp. (strain JS666 / ATCC BAA-500).